The chain runs to 284 residues: MFIISGRTMLKKAQQEGYAVPAFNIHNLETLQVVVETAAELRSPLIVAGTPGTFSYAGVGNIVAIAAELAKSWNHPLAVHLDHHEKLADIKMKVAAGVRSVMIDGSHFPFADNIALVKSVVDYCHRYDVSVEAELGRLGGQEDDLIVDGKDALYTHPEQAREFVEKTGIDSLAIAIGTAHGLYTAEPKLDFERLTEIRQRVDVPLVLHGASGLPTRDITRAISLGICKVNVATELKIAFSGALKNYLTQHAEASDPHHYMIPAKAAMKEVVRKVIADCGCEGKL.

Residue Asp-82 is the Proton donor of the active site. Zn(2+) is bound by residues His-83 and His-180. A dihydroxyacetone phosphate-binding site is contributed by Gly-181. Residue His-208 participates in Zn(2+) binding. Dihydroxyacetone phosphate is bound by residues 209–211 and 230–233; these read GAS and NVAT.

It belongs to the class II fructose-bisphosphate aldolase family. TagBP aldolase GatY subfamily. Forms a complex with GatZ. Zn(2+) serves as cofactor.

It catalyses the reaction D-tagatofuranose 1,6-bisphosphate = D-glyceraldehyde 3-phosphate + dihydroxyacetone phosphate. Its pathway is carbohydrate metabolism; D-tagatose 6-phosphate degradation; D-glyceraldehyde 3-phosphate and glycerone phosphate from D-tagatose 6-phosphate: step 2/2. Catalytic subunit of the tagatose-1,6-bisphosphate aldolase GatYZ, which catalyzes the reversible aldol condensation of dihydroxyacetone phosphate (DHAP or glycerone-phosphate) with glyceraldehyde 3-phosphate (G3P) to produce tagatose 1,6-bisphosphate (TBP). Requires GatZ subunit for full activity and stability. Is involved in the catabolism of galactitol. This is D-tagatose-1,6-bisphosphate aldolase subunit GatY from Salmonella choleraesuis (strain SC-B67).